The sequence spans 271 residues: Phospholipid scramblase family member 5 (271 aa).

Over residues 1 to 10 the composition is skewed to polar residues; the sequence is MASKDAQNQR. A disordered region spans residues 1-33; that stretch reads MASKDAQNQRRGLPGFLPGAPDPDQSLPASSNP. The tract at residues 1–45 is proline-rich domain (PRD); it reads MASKDAQNQRRGLPGFLPGAPDPDQSLPASSNPGNQAWQLSLPLP.

Belongs to the phospholipid scramblase family.

This is Phospholipid scramblase family member 5 (PLSCR5) from Homo sapiens (Human).